Here is a 205-residue protein sequence, read N- to C-terminus: Small ribosomal subunit protein uS4 (205 aa).

Positions methionine 1–glycine 16 are enriched in basic and acidic residues. Residues methionine 1–serine 46 are disordered. An S4 RNA-binding domain is found at serine 94 to valine 157.

Belongs to the universal ribosomal protein uS4 family. Part of the 30S ribosomal subunit. Contacts protein S5. The interaction surface between S4 and S5 is involved in control of translational fidelity.

Functionally, one of the primary rRNA binding proteins, it binds directly to 16S rRNA where it nucleates assembly of the body of the 30S subunit. With S5 and S12 plays an important role in translational accuracy. This Bartonella tribocorum (strain CIP 105476 / IBS 506) protein is Small ribosomal subunit protein uS4.